The sequence spans 418 residues: Tryptophan synthase beta chain (418 aa).

A compositionally biased stretch (polar residues) spans 1-18; it reads MTSTLPKASQPDPSSLQP. Residues 1 to 28 are disordered; sequence MTSTLPKASQPDPSSLQPSARPGAHGRF. Lys-111 is modified (N6-(pyridoxal phosphate)lysine).

This sequence belongs to the TrpB family. Tetramer of two alpha and two beta chains. It depends on pyridoxal 5'-phosphate as a cofactor.

The catalysed reaction is (1S,2R)-1-C-(indol-3-yl)glycerol 3-phosphate + L-serine = D-glyceraldehyde 3-phosphate + L-tryptophan + H2O. It functions in the pathway amino-acid biosynthesis; L-tryptophan biosynthesis; L-tryptophan from chorismate: step 5/5. Its function is as follows. The beta subunit is responsible for the synthesis of L-tryptophan from indole and L-serine. This chain is Tryptophan synthase beta chain, found in Synechococcus sp. (strain CC9902).